We begin with the raw amino-acid sequence, 266 residues long: MGLLSVDLLITLQILPVFFSNCLFLALYDSVILLKHVALLLSRSKSTRGEWRRMLTSEGLRCVWNSFLLDAYKQVKLGEDAPNSSVVHVSNPESGNNYASEKTADGAECHLLDFASAERPLVVNFGSATUPPFTRQLPAFRQLVEEFSSVADFLLVYIDEAHPSDGWAVPGDSSLSFEVKKHRNQEDRCAAAHQLLERFSLPPQCQVVADRMDNNANVAYGVAFERVCIVQRRKIAYLGGKGPFSYNLQEVRSWLEKNFSKRUILD.

Residues 1-9 lie on the Lumenal side of the membrane; sequence MGLLSVDLL. Residues 10–34 form a helical; Signal-anchor for type III membrane protein membrane-spanning segment; that stretch reads ITLQILPVFFSNCLFLALYDSVILL. Residues 35–266 lie on the Cytoplasmic side of the membrane; the sequence is KHVALLLSRS…KNFSKRUILD (232 aa). Residue Sec-130 is part of the active site. Non-standard amino acids (selenocysteine) are located at Sec-130 and Sec-263.

Belongs to the iodothyronine deiodinase family. In terms of assembly, predominantly monomer. Can form homodimers but homodimerization is not essential for enzyme activity. Interacts with USP20 and USP33. Interacts with MARCHF6. In terms of processing, ubiquitinated by MARCHF6, leading to its degradation by the proteasome. Deubiquitinated by USP20 and USP33. In terms of tissue distribution, expressed in mammary gland and in brain.

The protein resides in the endoplasmic reticulum membrane. It catalyses the reaction 3,3',5-triiodo-L-thyronine + iodide + A + H(+) = L-thyroxine + AH2. The catalysed reaction is 3,3'-diiodo-L-thyronine + iodide + A + H(+) = 3,3',5'-triiodo-L-thyronine + AH2. The enzyme catalyses 3'-iodo-L-thyronine + iodide + A + H(+) = 3',5'-diiodo-L-thyronine + AH2. It carries out the reaction 3,3'-diiodothyronamine + iodide + A + H(+) = 3,3',5'-triiodothyronamine + AH2. It catalyses the reaction 3'-iodothyronamine + iodide + A + H(+) = 3',5'-diiodothyronamine + AH2. Its function is as follows. Plays a crucial role in the metabolism of thyroid hormones (TH) and has specific roles in TH activation and inactivation by deiodination. Catalyzes the deiodination of L-thyroxine (T4) to 3,5,3'-triiodothyronine (T3) and 3,3',5'-triiodothyronine (rT3) to 3,3'-diiodothyronine (3,3'-T2) via outer-ring deiodination (ORD). Catalyzes the deiodination of 3',5'-diiodothyronine (3',5'-T2) to 3'-monoiodothyronine (3'-T1) via ORD. Catalyzes the phenolic ring deiodinations of 3,3',5'-triiodothyronamine and 3',5'- diiodothyronamine. This Mus musculus (Mouse) protein is Type II iodothyronine deiodinase (Dio2).